The sequence spans 273 residues: Protein E6 (273 aa).

Zinc fingers lie at residues Cys27–Cys63 and Cys100–Cys140.

This sequence belongs to the papillomaviridae E6 protein family. In terms of assembly, forms homodimers. Interacts with ubiquitin-protein ligase UBE3A/E6-AP; this interaction stimulates UBE3A ubiquitin activity. Interacts with host BAK1.

Its subcellular location is the host cytoplasm. The protein resides in the host nucleus. In terms of biological role, plays a major role in the induction and maintenance of cellular transformation. E6 associates with host UBE3A/E6-AP ubiquitin-protein ligase and modulates its activity. Protects host keratinocytes from apoptosis by mediating the degradation of host BAK1. May also inhibit host immune response. This chain is Protein E6, found in Sylvilagus floridanus (Cottontail rabbit).